A 51-amino-acid polypeptide reads, in one-letter code: Large ribosomal subunit protein eL39y (51 aa).

The disordered stretch occupies residues 1-21; that stretch reads MPSHKSFMIKKKLGKKMRQNR. Residues 7 to 19 show a composition bias toward basic residues; the sequence is FMIKKKLGKKMRQ.

It belongs to the eukaryotic ribosomal protein eL39 family.

The chain is Large ribosomal subunit protein eL39y (RPL39B) from Arabidopsis thaliana (Mouse-ear cress).